A 75-amino-acid polypeptide reads, in one-letter code: UPF0352 protein plu2871 (75 aa).

Belongs to the UPF0352 family.

This chain is UPF0352 protein plu2871, found in Photorhabdus laumondii subsp. laumondii (strain DSM 15139 / CIP 105565 / TT01) (Photorhabdus luminescens subsp. laumondii).